The following is a 435-amino-acid chain: Enolase (435 aa).

Glutamine 163 is a binding site for (2R)-2-phosphoglycerate. Residue glutamate 205 is the Proton donor of the active site. Mg(2+) is bound by residues aspartate 243, glutamate 292, and aspartate 319. The (2R)-2-phosphoglycerate site is built by lysine 344, arginine 373, serine 374, and lysine 395. Lysine 344 serves as the catalytic Proton acceptor.

This sequence belongs to the enolase family. The cofactor is Mg(2+).

It localises to the cytoplasm. The protein resides in the secreted. It is found in the cell surface. The enzyme catalyses (2R)-2-phosphoglycerate = phosphoenolpyruvate + H2O. Its pathway is carbohydrate degradation; glycolysis; pyruvate from D-glyceraldehyde 3-phosphate: step 4/5. Its function is as follows. Catalyzes the reversible conversion of 2-phosphoglycerate (2-PG) into phosphoenolpyruvate (PEP). It is essential for the degradation of carbohydrates via glycolysis. This Streptococcus pyogenes serotype M12 (strain MGAS2096) protein is Enolase.